The sequence spans 342 residues: Nuclear distribution protein nudE homolog 1 (342 aa).

Residues 45–189 adopt a coiled-coil conformation; sequence REYEAELETQ…ELAVQQKQEK (145 aa). Positions 89–157 are interaction with PAFAH1B1; sequence EWYRQVSALE…ERNAFLESEL (69 aa). Disordered stretches follow at residues 182-203 and 320-342; these read AVQQ…TERT and GTRP…KMLL. The span at 322–342 shows a compositional bias: polar residues; that stretch reads RPSSTPGPMSHPSQSVVKMLL.

It belongs to the nudE family. In terms of assembly, self-associates. Interacts with PAFAH1B1. Post-translationally, phosphorylated in mitosis.

The protein resides in the cytoplasm. It localises to the cytoskeleton. It is found in the microtubule organizing center. The protein localises to the centrosome. Its subcellular location is the spindle. The protein resides in the chromosome. It localises to the centromere. It is found in the kinetochore. The protein localises to the cleavage furrow. Its subcellular location is the cytoplasmic vesicle membrane. Required for centrosome duplication and formation and function of the mitotic spindle. This chain is Nuclear distribution protein nudE homolog 1 (NDE1), found in Gallus gallus (Chicken).